The primary structure comprises 259 residues: 4-hydroxy-tetrahydrodipicolinate reductase (259 aa).

Residues 9-14 and glutamate 35 contribute to the NAD(+) site; that span reads GAGGRM. Arginine 36 contacts NADP(+). NAD(+) contacts are provided by residues 92–94 and 116–119; these read GTT and APNM. The active-site Proton donor/acceptor is the histidine 149. Histidine 150 lines the (S)-2,3,4,5-tetrahydrodipicolinate pocket. The active-site Proton donor is lysine 153. Residue 159–160 coordinates (S)-2,3,4,5-tetrahydrodipicolinate; sequence GT.

The protein belongs to the DapB family.

Its subcellular location is the cytoplasm. It catalyses the reaction (S)-2,3,4,5-tetrahydrodipicolinate + NAD(+) + H2O = (2S,4S)-4-hydroxy-2,3,4,5-tetrahydrodipicolinate + NADH + H(+). The catalysed reaction is (S)-2,3,4,5-tetrahydrodipicolinate + NADP(+) + H2O = (2S,4S)-4-hydroxy-2,3,4,5-tetrahydrodipicolinate + NADPH + H(+). The protein operates within amino-acid biosynthesis; L-lysine biosynthesis via DAP pathway; (S)-tetrahydrodipicolinate from L-aspartate: step 4/4. Catalyzes the conversion of 4-hydroxy-tetrahydrodipicolinate (HTPA) to tetrahydrodipicolinate. This chain is 4-hydroxy-tetrahydrodipicolinate reductase, found in Nitratidesulfovibrio vulgaris (strain DSM 19637 / Miyazaki F) (Desulfovibrio vulgaris).